The primary structure comprises 265 residues: Cytoplasmic envelopment protein 1 (265 aa).

This sequence belongs to the herpesviridae cytoplasmic envelopment protein 1 family.

Its subcellular location is the virion. It is found in the virion tegument. It localises to the host cytoplasm. The protein resides in the host Golgi apparatus. Plays a critical role in cytoplasmic virus egress. Participates in the final step of tegumentation and envelope acquisition within the host cytoplasm. The protein is Cytoplasmic envelopment protein 1 (42) of Saimiriine herpesvirus 2 (strain 11) (SaHV-2).